A 159-amino-acid polypeptide reads, in one-letter code: Succinate dehydrogenase [ubiquinone] cytochrome b small subunit, mitochondrial (159 aa).

Residues 1-56 (MAVLWRLSAVCGALGGRALLLRTPVVRPAHISAFLQDRPIPEWCGVQHIHLSPSHH) constitute a mitochondrion transit peptide. Residues 57–63 (SGSKAAS) lie on the Mitochondrial matrix side of the membrane. The chain crosses the membrane as a helical span at residues 64-85 (LHWTSERVVSVLLLGLLPAAYL). Over 86-90 (NPCSA) the chain is Mitochondrial intermembrane. Residues 91–111 (MDYSLAAALTLHGHWGLGQVV) form a helical membrane-spanning segment. H102 lines the heme b pocket. The Mitochondrial matrix segment spans residues 112 to 122 (TDYVHGDALQK). Y114 provides a ligand contact to a ubiquinone. A helical membrane pass occupies residues 123–144 (AAKAGLLALSALTFAGLCYFNY). The Mitochondrial intermembrane segment spans residues 145–159 (HDVGICKAVAMLWKL).

The protein belongs to the CybS family. In terms of assembly, component of complex II composed of four subunits: the flavoprotein (FP) SDHA, iron-sulfur protein (IP) SDHB, and a cytochrome b560 composed of SDHC and SDHD.

The protein localises to the mitochondrion inner membrane. Its pathway is carbohydrate metabolism; tricarboxylic acid cycle. Functionally, membrane-anchoring subunit of succinate dehydrogenase (SDH) that is involved in complex II of the mitochondrial electron transport chain and is responsible for transferring electrons from succinate to ubiquinone (coenzyme Q). SDH also oxidizes malate to the non-canonical enol form of oxaloacetate, enol-oxaloacetate. Enol-oxaloacetate, which is a potent inhibitor of the succinate dehydrogenase activity, is further isomerized into keto-oxaloacetate. This Homo sapiens (Human) protein is Succinate dehydrogenase [ubiquinone] cytochrome b small subunit, mitochondrial (SDHD).